Consider the following 463-residue polypeptide: Dipeptidyl peptidase 1 (463 aa).

Residues 1 to 24 (MGVGPASLLAALLLLLSGDRAVRC) form the signal peptide. Asn29, Asn53, and Asn119 each carry an N-linked (GlcNAc...) asparagine glycan. Disulfide bonds link Cys30/Cys118, Cys54/Cys136, Cys255/Cys298, Cys291/Cys331, and Cys321/Cys337. Residues 135-230 (ACFTGKKVGT…TAEIQQKILH (96 aa)) constitute a propeptide that is removed on maturation. Cys258 is a catalytic residue. N-linked (GlcNAc...) asparagine glycosylation is present at Asn276. Chloride is bound by residues Phe302 and Tyr304. Position 347 (Tyr347) interacts with chloride. Active-site residues include His405 and Asn427.

It belongs to the peptidase C1 family. Tetramer of heterotrimers consisting of exclusion domain, heavy- and light chains. The cofactor is chloride.

It is found in the lysosome. The enzyme catalyses Release of an N-terminal dipeptide, Xaa-Yaa-|-Zaa-, except when Xaa is Arg or Lys, or Yaa or Zaa is Pro.. Thiol protease. Has dipeptidylpeptidase activity. Active against a broad range of dipeptide substrates composed of both polar and hydrophobic amino acids. Proline cannot occupy the P1 position and arginine cannot occupy the P2 position of the substrate. Can act as both an exopeptidase and endopeptidase. Activates serine proteases such as elastase, cathepsin G and granzymes A and B. In Macaca fascicularis (Crab-eating macaque), this protein is Dipeptidyl peptidase 1 (CTSC).